The following is a 390-amino-acid chain: Acetate kinase (390 aa).

Asn-10 is a Mg(2+) binding site. Lys-17 lines the ATP pocket. Arg-89 contributes to the substrate binding site. Asp-146 serves as the catalytic Proton donor/acceptor. ATP-binding positions include 204 to 208 (HLGNG), 278 to 280 (DMR), and 323 to 327 (GIGEN). Glu-376 is a Mg(2+) binding site.

It belongs to the acetokinase family. Homodimer. It depends on Mg(2+) as a cofactor. The cofactor is Mn(2+).

Its subcellular location is the cytoplasm. It catalyses the reaction acetate + ATP = acetyl phosphate + ADP. It participates in metabolic intermediate biosynthesis; acetyl-CoA biosynthesis; acetyl-CoA from acetate: step 1/2. Catalyzes the formation of acetyl phosphate from acetate and ATP. Can also catalyze the reverse reaction. The protein is Acetate kinase of Mycoplasma pneumoniae (strain ATCC 29342 / M129 / Subtype 1) (Mycoplasmoides pneumoniae).